The primary structure comprises 429 residues: Serine--tRNA ligase (429 aa).

Residue 235–237 participates in L-serine binding; it reads TAE. 266-268 contacts ATP; that stretch reads RSE. Glu289 lines the L-serine pocket. 353-356 provides a ligand contact to ATP; sequence EISS. Ser389 contacts L-serine.

The protein belongs to the class-II aminoacyl-tRNA synthetase family. Type-1 seryl-tRNA synthetase subfamily. Homodimer. The tRNA molecule binds across the dimer.

The protein resides in the cytoplasm. The enzyme catalyses tRNA(Ser) + L-serine + ATP = L-seryl-tRNA(Ser) + AMP + diphosphate + H(+). It catalyses the reaction tRNA(Sec) + L-serine + ATP = L-seryl-tRNA(Sec) + AMP + diphosphate + H(+). It functions in the pathway aminoacyl-tRNA biosynthesis; selenocysteinyl-tRNA(Sec) biosynthesis; L-seryl-tRNA(Sec) from L-serine and tRNA(Sec): step 1/1. Its function is as follows. Catalyzes the attachment of serine to tRNA(Ser). Is also able to aminoacylate tRNA(Sec) with serine, to form the misacylated tRNA L-seryl-tRNA(Sec), which will be further converted into selenocysteinyl-tRNA(Sec). The sequence is that of Serine--tRNA ligase from Haemophilus influenzae (strain PittEE).